The sequence spans 100 residues: Acylphosphatase (100 aa).

One can recognise an Acylphosphatase-like domain in the interval 14–100 (RWRFFVEGKV…TGADWFEIRS (87 aa)). Residues Arg29 and Asn47 contribute to the active site.

This sequence belongs to the acylphosphatase family.

It carries out the reaction an acyl phosphate + H2O = a carboxylate + phosphate + H(+). The sequence is that of Acylphosphatase (acyP) from Synechococcus sp. (strain WH7803).